We begin with the raw amino-acid sequence, 87 residues long: Large ribosomal subunit protein uL23c (87 aa).

Belongs to the universal ribosomal protein uL23 family. Part of the 50S ribosomal subunit.

The protein resides in the plastid. The protein localises to the chloroplast. Its function is as follows. Binds to 23S rRNA. The chain is Large ribosomal subunit protein uL23c (rpl23) from Ostreococcus tauri.